A 519-amino-acid polypeptide reads, in one-letter code: Glutamate--cysteine ligase (519 aa).

This sequence belongs to the glutamate--cysteine ligase type 1 family. Type 1 subfamily.

It carries out the reaction L-cysteine + L-glutamate + ATP = gamma-L-glutamyl-L-cysteine + ADP + phosphate + H(+). Its pathway is sulfur metabolism; glutathione biosynthesis; glutathione from L-cysteine and L-glutamate: step 1/2. This chain is Glutamate--cysteine ligase, found in Photorhabdus laumondii subsp. laumondii (strain DSM 15139 / CIP 105565 / TT01) (Photorhabdus luminescens subsp. laumondii).